The primary structure comprises 229 residues: Large ribosomal subunit protein uL1 (229 aa).

This sequence belongs to the universal ribosomal protein uL1 family. Part of the 50S ribosomal subunit.

Its function is as follows. Binds directly to 23S rRNA. The L1 stalk is quite mobile in the ribosome, and is involved in E site tRNA release. Protein L1 is also a translational repressor protein, it controls the translation of the L11 operon by binding to its mRNA. The protein is Large ribosomal subunit protein uL1 of Lactococcus lactis subsp. cremoris (strain MG1363).